We begin with the raw amino-acid sequence, 249 residues long: Methyltransferase 1 (249 aa).

The protein belongs to the FkbM methyltransferase family.

Its pathway is secondary metabolite biosynthesis. In terms of biological role, methyltransferase; part of the pathway that mediates the biosynthesis of tenellin-type 2-pyridones, iron-chelating compounds involved in iron stress tolerance, competition with the natural competitor fungus Metarhizium robertsii and insect hosts infection. Methylates pyridovericin-N-O-(beta-D-glucopyranoside) produced by the UDP-glucosyltransferase GT1 to yield pyridovericin-N-O-(4-O-methyl-beta-D-glucopyranoside) (PMGP). The pathway begins with the assembly of the polyketide-amino acid backbone by the hybrid PKS-NRPS tenS with the help of the enoyl reductase tenC. These enzymes catalyze the synthesis of the pyrrolidine-2-dione intermediates pretellinin A, 11-hydropretellenin A, 12-hydropretellenin A, 13-hydropretellenin A, 14-hydropretellenin A, 12-oxopretellenin A and prototellinin D. The cytochrome P450 monooxygenase tenA then catalyzes an oxidative ring expansion of pretenellin A and 14-hydropretellenin A to form the 2-pyridone core, leading to pretenellin B and pyridovericin, respectively. The cytochrome P450 monooxygenase tenB is then required for the selective N-hydroxylation of the 2-pyridone nitrogen of yield tellinin and 15-hydroxytellenin (15-HT), respectively. The UDP-glucosyltransferase GT1 and the methyltransferase MT1, located outside the tenS gene cluster, contribute to the stepwise glycosylation and methylation of 15-HT to obtain the glycoside pyridovericin-N-O-(4-O-methyl-beta-D-glucopyranoside) (PMGP). Additional related compounds such as 1-O-methyl-15-HT, (8Z)-1-O-methyl-15-HT, and O-methyltenellin A are also produced but the enzymes involved in their biosynthesis have still to be determined. The protein is Methyltransferase 1 of Beauveria bassiana (strain ARSEF 2860) (White muscardine disease fungus).